We begin with the raw amino-acid sequence, 575 residues long: Potassium-transporting ATPase potassium-binding subunit (575 aa).

12 helical membrane passes run 4-24 (SAWGLLALFLAALLVLAWPVG), 61-81 (LRYAIALLAFNAVGAVFVYAL), 133-153 (GLAVQNFFSAATGIAVAFALI), 180-200 (LWVLVPLSFVLAVFFVSQGVI), 258-278 (LANLLQMIAVFLIPAALCFAF), 289-309 (WAVLAAMTVMFVAAVMVVIPA), 344-364 (IDASALFAAVTTAASCGAVIA), 372-392 (LGGMVPMVLMQLGEVVFGGVG), 394-414 (GLYGMLIFAMLAVFIAGLMIG), 431-451 (LISIAILVTPVLVLAGTAVAV), 499-519 (LLGLAMWLGRFAVIVPVLAIA), and 545-565 (LLIGTVLLVGLLNYVPALALG).

Belongs to the KdpA family. In terms of assembly, the system is composed of three essential subunits: KdpA, KdpB and KdpC.

The protein localises to the cell inner membrane. Its function is as follows. Part of the high-affinity ATP-driven potassium transport (or Kdp) system, which catalyzes the hydrolysis of ATP coupled with the electrogenic transport of potassium into the cytoplasm. This subunit binds the periplasmic potassium ions and delivers the ions to the membrane domain of KdpB through an intramembrane tunnel. The sequence is that of Potassium-transporting ATPase potassium-binding subunit from Variovorax paradoxus (strain S110).